An 83-amino-acid polypeptide reads, in one-letter code: Small ribosomal subunit protein eS21 (83 aa).

Methionine 1 carries the N-acetylmethionine modification. A Glycyl lysine isopeptide (Lys-Gly) (interchain with G-Cter in SUMO2) cross-link involves residue lysine 41.

The protein belongs to the eukaryotic ribosomal protein eS21 family. As to quaternary structure, component of the 40S small ribosomal subunit.

The protein resides in the cytoplasm. It is found in the cytosol. The protein localises to the rough endoplasmic reticulum. Its function is as follows. Component of the small ribosomal subunit. The ribosome is a large ribonucleoprotein complex responsible for the synthesis of proteins in the cell. The polypeptide is Small ribosomal subunit protein eS21 (RPS21) (Oryctolagus cuniculus (Rabbit)).